A 170-amino-acid chain; its full sequence is MAEEHRCQTPESNRLCVNNCGFLGSSATMNLCSNCYGDLCLKQQQQSSSIKSTVESSLSVSPPSSSSSEISSPIIPPLLKNPSVKLEVPEKKAVISLPTTEQNQQQRPNRCTTCRKRVGLTGFKCRCGTMFCGVHRYPEIHGCSYDFKSAGREEIAKANPLVKAAKLQKI.

The A20-type zinc-finger motif lies at 10–44; that stretch reads PESNRLCVNNCGFLGSSATMNLCSNCYGDLCLKQQ. Residues cysteine 16, cysteine 20, cysteine 32, and cysteine 35 each contribute to the Zn(2+) site. The disordered stretch occupies residues 53–76; sequence TVESSLSVSPPSSSSSEISSPIIP. The segment at 105 to 151 adopts an AN1-type zinc-finger fold; the sequence is QQRPNRCTTCRKRVGLTGFKCRCGTMFCGVHRYPEIHGCSYDFKSAG. Zn(2+) is bound by residues cysteine 111, cysteine 114, cysteine 125, cysteine 127, cysteine 132, histidine 135, histidine 141, and cysteine 143.

Functionally, may be involved in environmental stress response. The sequence is that of Zinc finger A20 and AN1 domain-containing stress-associated protein 6 (SAP6) from Arabidopsis thaliana (Mouse-ear cress).